We begin with the raw amino-acid sequence, 106 residues long: MADWNGEYISPYAEHGKKSEQVKKITVSIPLKVLKVLTDERTRRQINNLRHATNSELLCEAFLHAYTGQPLPTDEDLRKDRPDDIPTEAKALMTAMGIEFEAFDEE.

The protein belongs to the MetJ family. In terms of assembly, homodimer.

The protein resides in the cytoplasm. Functionally, this regulatory protein, when combined with SAM (S-adenosylmethionine) represses the expression of the methionine regulon and of enzymes involved in SAM synthesis. This Vibrio campbellii (strain ATCC BAA-1116) protein is Met repressor.